The primary structure comprises 663 residues: Zeaxanthin epoxidase, chloroplastic (663 aa).

A chloroplast-targeting transit peptide spans 1–50 (MYSTVFYTSVHPSTSAFSRKQLPLLISKDFPTELYHSLPCSRSLENGQIK). Residues 81–109 (KVLVAGGGIGGLVFALAAKKRGFDVLVFE) and 359–372 (TFSWGKGRVTLLGD) contribute to the FAD site. Residues 547–611 (LVLSRDENMP…HGTWITDNEG (65 aa)) form the FHA domain.

The cofactor is FAD. In terms of tissue distribution, higher expression in leaves than in roots.

The protein resides in the plastid. Its subcellular location is the chloroplast membrane. The protein localises to the chloroplast thylakoid membrane. The enzyme catalyses all-trans-zeaxanthin + 4 reduced [2Fe-2S]-[ferredoxin] + 2 O2 + 4 H(+) = all-trans-violaxanthin + 4 oxidized [2Fe-2S]-[ferredoxin] + 2 H2O. Its pathway is plant hormone biosynthesis; abscisate biosynthesis. Converts zeaxanthin into antheraxanthin and subsequently violaxanthin. Involved in the epoxidation of zeaxanthin. Plays an important role in resistance to stresses, seed development and dormancy. The polypeptide is Zeaxanthin epoxidase, chloroplastic (ABA2) (Nicotiana plumbaginifolia (Leadwort-leaved tobacco)).